A 203-amino-acid chain; its full sequence is Peptidyl-prolyl cis-trans isomerase FKBP11 (203 aa).

A signal peptide spans 1-29 (MTLRPSLLPLRLLLLLLLLLRGAVCQAEA). The PPIase FKBP-type domain occupies 59-146 (GDTLHIHYSG…HFDVELIALI (88 aa)). A helical transmembrane segment spans residues 158-178 (ILPLVGMAMVPALLGLIGYHL).

Belongs to the FKBP-type PPIase family. In terms of assembly, interacts with IFITM5.

It localises to the membrane. It carries out the reaction [protein]-peptidylproline (omega=180) = [protein]-peptidylproline (omega=0). Its function is as follows. PPIases accelerate the folding of proteins during protein synthesis. This Bos taurus (Bovine) protein is Peptidyl-prolyl cis-trans isomerase FKBP11 (FKBP11).